A 237-amino-acid chain; its full sequence is Carboxy-S-adenosyl-L-methionine synthase (237 aa).

S-adenosyl-L-methionine contacts are provided by residues Tyr36, 61 to 63, 86 to 87, 112 to 113, Asn127, and Arg194; these read GAS, DN, and DI.

Belongs to the class I-like SAM-binding methyltransferase superfamily. Cx-SAM synthase family. As to quaternary structure, homodimer.

The enzyme catalyses prephenate + S-adenosyl-L-methionine = carboxy-S-adenosyl-L-methionine + 3-phenylpyruvate + H2O. Its function is as follows. Catalyzes the conversion of S-adenosyl-L-methionine (SAM) to carboxy-S-adenosyl-L-methionine (Cx-SAM). This is Carboxy-S-adenosyl-L-methionine synthase from Ruthia magnifica subsp. Calyptogena magnifica.